Reading from the N-terminus, the 513-residue chain is 2-isopropylmalate synthase (513 aa).

The Pyruvate carboxyltransferase domain maps to 4 to 268; the sequence is IKIFDTTLRD…ETGIRTELIY (265 aa). The Mn(2+) site is built by Asp13, His203, His205, and Asn239. The regulatory domain stretch occupies residues 392 to 513; the sequence is RLVHFHVHTG…GLLRKNGGVE (122 aa).

Belongs to the alpha-IPM synthase/homocitrate synthase family. LeuA type 1 subfamily. Homodimer. Requires Mn(2+) as cofactor.

The protein resides in the cytoplasm. The enzyme catalyses 3-methyl-2-oxobutanoate + acetyl-CoA + H2O = (2S)-2-isopropylmalate + CoA + H(+). The protein operates within amino-acid biosynthesis; L-leucine biosynthesis; L-leucine from 3-methyl-2-oxobutanoate: step 1/4. Catalyzes the condensation of the acetyl group of acetyl-CoA with 3-methyl-2-oxobutanoate (2-ketoisovalerate) to form 3-carboxy-3-hydroxy-4-methylpentanoate (2-isopropylmalate). The protein is 2-isopropylmalate synthase of Thermotoga neapolitana (strain ATCC 49049 / DSM 4359 / NBRC 107923 / NS-E).